The primary structure comprises 125 residues: Large ribosomal subunit protein bL12 (125 aa).

This sequence belongs to the bacterial ribosomal protein bL12 family. Homodimer. Part of the ribosomal stalk of the 50S ribosomal subunit. Forms a multimeric L10(L12)X complex, where L10 forms an elongated spine to which 2 to 4 L12 dimers bind in a sequential fashion. Binds GTP-bound translation factors.

In terms of biological role, forms part of the ribosomal stalk which helps the ribosome interact with GTP-bound translation factors. Is thus essential for accurate translation. In Cereibacter sphaeroides (Rhodobacter sphaeroides), this protein is Large ribosomal subunit protein bL12.